A 444-amino-acid chain; its full sequence is UDP-N-acetylglucosamine 1-carboxyvinyltransferase (444 aa).

Position 22 to 23 (22 to 23) interacts with phosphoenolpyruvate; that stretch reads KN. Arginine 94 lines the UDP-N-acetyl-alpha-D-glucosamine pocket. The active-site Proton donor is the aspartate 119. The UDP-N-acetyl-alpha-D-glucosamine site is built by aspartate 309 and valine 331.

Belongs to the EPSP synthase family. MurA subfamily.

It is found in the cytoplasm. It carries out the reaction phosphoenolpyruvate + UDP-N-acetyl-alpha-D-glucosamine = UDP-N-acetyl-3-O-(1-carboxyvinyl)-alpha-D-glucosamine + phosphate. The protein operates within cell wall biogenesis; peptidoglycan biosynthesis. In terms of biological role, cell wall formation. Adds enolpyruvyl to UDP-N-acetylglucosamine. This chain is UDP-N-acetylglucosamine 1-carboxyvinyltransferase, found in Chlamydia abortus (strain DSM 27085 / S26/3) (Chlamydophila abortus).